Reading from the N-terminus, the 31-residue chain is Circulin-B (31 aa).

Residues 1–31 (GVIPCGESCVFIPCISTLLGCSCKNKVCYRN) constitute a cross-link (cyclopeptide (Gly-Asn)). 3 disulfides stabilise this stretch: Cys-5/Cys-21, Cys-9/Cys-23, and Cys-14/Cys-28.

In terms of processing, this is a cyclic peptide.

Probably participates in a plant defense mechanism. Has antibiotic activity. Inhibits the cytopathic effects and replication of the human immunodeficiency virus. Active against both Gram-positive and Gram-negative bacteria. The sequence is that of Circulin-B from Chassalia parviflora.